A 558-amino-acid chain; its full sequence is Potassium-transporting ATPase potassium-binding subunit (558 aa).

Transmembrane regions (helical) follow at residues 1-21 (MEII…SGYL), 66-86 (FNGF…WLFL), 127-147 (MIVM…VCIA), 166-186 (IVRF…ILLM), 245-265 (IWSN…MLFL), 281-301 (ALIL…LTMW), 327-347 (FGAG…TGSV), 354-374 (LTPI…VFGG), 377-397 (VGLM…SLMV), 416-436 (IVLV…LAFM), 482-502 (ISTG…QLMI), and 531-551 (IVFI…LGPI).

This sequence belongs to the KdpA family. The system is composed of three essential subunits: KdpA, KdpB and KdpC.

Its subcellular location is the cell membrane. Its function is as follows. Part of the high-affinity ATP-driven potassium transport (or Kdp) system, which catalyzes the hydrolysis of ATP coupled with the electrogenic transport of potassium into the cytoplasm. This subunit binds the extracellular potassium ions and delivers the ions to the membrane domain of KdpB through an intramembrane tunnel. The polypeptide is Potassium-transporting ATPase potassium-binding subunit (Staphylococcus aureus (strain USA300)).